Consider the following 117-residue polypeptide: UPF0295 protein YgzB (117 aa).

2 consecutive transmembrane segments (helical) span residues 13-33 (TFAL…IFFK) and 41-61 (LFMI…FWIG).

This sequence belongs to the UPF0295 family.

The protein localises to the cell membrane. The sequence is that of UPF0295 protein YgzB (ygzB) from Bacillus subtilis (strain 168).